The primary structure comprises 265 residues: Cyclin-C (265 aa).

One can recognise a Cyclin N-terminal domain in the interval 48–151; it reads IQVLGEQLKL…LLENLDCCLI (104 aa).

The protein belongs to the cyclin family. Cyclin C subfamily. As to quaternary structure, component of the Cdk8 module of the Mediator complex.

It is found in the nucleus. Functionally, component of the Mediator complex, a coactivator involved in regulated gene transcription of nearly all RNA polymerase II-dependent genes. Mediator functions as a bridge to convey information from gene-specific regulatory proteins to the basal RNA polymerase II transcription machinery. Mediator is recruited to promoters by direct interactions with regulatory proteins and serves as a scaffold for the assembly of a functional preinitiation complex with RNA polymerase II and the general transcription factors. Binds to and activates cyclin-dependent kinase Cdk8 that phosphorylates the CTD (C-terminal domain) of the large subunit of RNA polymerase II (RNAp II), which may inhibit the formation of a transcription initiation complex. The chain is Cyclin-C (CycC) from Aedes aegypti (Yellowfever mosquito).